Consider the following 97-residue polypeptide: Conotoxin Cal6.1a (97 aa).

The signal sequence occupies residues 1 to 22; the sequence is MKLTTVLVVALLVLAACQFTVT. Residues 23–46 are disordered; sequence DNSGDDPENPSLRSVGENQNPDST. Positions 23–68 are excised as a propeptide; it reads DNSGDDPENPSLRSVGENQNPDSTKTITAWATRDMTNMRRGLNRPS. Disulfide bonds link Cys71–Cys87, Cys78–Cys91, and Cys86–Cys96.

Belongs to the conotoxin O1 superfamily. Expressed by the venom duct.

It localises to the secreted. Probable neurotoxin with unknown target. Possibly targets ion channels. This chain is Conotoxin Cal6.1a, found in Californiconus californicus (California cone).